The following is a 403-amino-acid chain: Aminomethyltransferase, mitochondrial (403 aa).

The transit peptide at 1–28 (MQRAMTVVPHLGLRLQALPLALGRPLSR) directs the protein to the mitochondrion. The substrate site is built by Glu232, Arg261, and Tyr399.

The protein belongs to the GcvT family. In terms of assembly, the glycine cleavage system is composed of four proteins: P, T, L and H.

The protein localises to the mitochondrion. The catalysed reaction is N(6)-[(R)-S(8)-aminomethyldihydrolipoyl]-L-lysyl-[protein] + (6S)-5,6,7,8-tetrahydrofolate = N(6)-[(R)-dihydrolipoyl]-L-lysyl-[protein] + (6R)-5,10-methylene-5,6,7,8-tetrahydrofolate + NH4(+). The glycine cleavage system catalyzes the degradation of glycine. The protein is Aminomethyltransferase, mitochondrial of Canis lupus familiaris (Dog).